A 78-amino-acid polypeptide reads, in one-letter code: Small nuclear ribonucleoprotein F (78 aa).

One can recognise a Sm domain in the interval 7-78; the sequence is NPKPFLQGLI…NVLWVGESTV (72 aa).

It belongs to the snRNP Sm proteins family. SmF/LSm6 subfamily. As to quaternary structure, belongs to the 40S cdc5-associated complex (or cwf complex), a spliceosome sub-complex reminiscent of a late-stage spliceosome composed of the U2, U5 and U6 snRNAs and at least brr2, cdc5, cwf2/prp3, cwf3/syf1, cwf4/syf3, cwf5/ecm2, spp42/cwf6, cwf7/spf27, cwf8, cwf9, cwf10, cwf11, cwf12, prp45/cwf13, cwf14, cwf15, cwf16, cwf17, cwf18, cwf19, cwf20, cwf21, cwf22, cwf23, cwf24, cwf25, cwf26, cyp7/cwf27, cwf28, cwf29/ist3, lea1, msl1, prp5/cwf1, prp10, prp12/sap130, prp17, prp22, sap61, sap62, sap114, sap145, slu7, smb1, smd1, smd3, smf1, smg1 and syf2.

It localises to the nucleus. The protein localises to the cytoplasm. Its function is as follows. Plays a role in pre-mRNA splicing as a core component of the spliceosomal U1, U2, U4 and U5 small nuclear ribonucleoproteins (snRNPs), the building blocks of the spliceosome. In Schizosaccharomyces pombe (strain 972 / ATCC 24843) (Fission yeast), this protein is Small nuclear ribonucleoprotein F (smf1).